Consider the following 245-residue polypeptide: Small ribosomal subunit protein uS2 (245 aa).

This sequence belongs to the universal ribosomal protein uS2 family.

This chain is Small ribosomal subunit protein uS2, found in Dehalococcoides mccartyi (strain ATCC BAA-2266 / KCTC 15142 / 195) (Dehalococcoides ethenogenes (strain 195)).